Here is a 147-residue protein sequence, read N- to C-terminus: UPF0306 protein YhbP (147 aa).

The protein belongs to the UPF0306 family.

The sequence is that of UPF0306 protein YhbP from Escherichia coli O1:K1 / APEC.